Consider the following 251-residue polypeptide: Phosphate import ATP-binding protein PstB 2 (251 aa).

The ABC transporter domain occupies 6 to 246 (FNIENLDLFY…PRDDRTRGYV (241 aa)). 38-45 (GPSGCGKS) provides a ligand contact to ATP.

The protein belongs to the ABC transporter superfamily. Phosphate importer (TC 3.A.1.7) family. In terms of assembly, the complex is composed of two ATP-binding proteins (PstB), two transmembrane proteins (PstC and PstA) and a solute-binding protein (PstS).

It is found in the cell inner membrane. It carries out the reaction phosphate(out) + ATP + H2O = ADP + 2 phosphate(in) + H(+). Its function is as follows. Part of the ABC transporter complex PstSACB involved in phosphate import. Responsible for energy coupling to the transport system. This chain is Phosphate import ATP-binding protein PstB 2, found in Vibrio cholerae serotype O1 (strain ATCC 39315 / El Tor Inaba N16961).